The sequence spans 616 residues: Kelch-like protein 36 (616 aa).

One can recognise a BTB domain in the interval 46 to 113 (CDVVLVADEQ…LYGGELVLDG (68 aa)). The 103-residue stretch at 148 to 250 (YLYLQELASI…PKNDLLHRVK (103 aa)) folds into the BACK domain. Kelch repeat units lie at residues 296–345 (CLLF…VLGG), 346–397 (FIFI…SIED), 398–444 (MLVA…IYKD), 446–493 (VYIS…SLGD), 494–546 (SIYS…VWEG), and 547–595 (RIYI…VCAL).

In terms of assembly, interacts with CUL3.

Its pathway is protein modification; protein ubiquitination. Functionally, probable substrate-specific adapter of an E3 ubiquitin-protein ligase complex which mediates the ubiquitination and subsequent proteasomal degradation of target proteins. The chain is Kelch-like protein 36 (KLHL36) from Bos taurus (Bovine).